A 304-amino-acid polypeptide reads, in one-letter code: 3-diazoavenalumate denitrifying reductase (304 aa).

This sequence belongs to the NAD(P)-dependent epimerase/dehydratase family.

It carries out the reaction 3-diazoavenalumate + NADPH + H(+) = avenalumate + N2 + NADP(+). It catalyses the reaction 3-diazoavenalumate + NADH + H(+) = avenalumate + N2 + NAD(+). The catalysed reaction is (E)-3-diazocoumarate + NADPH = N2 + (E)-4-coumarate + NADP(+). The enzyme catalyses (E)-3-diazocoumarate + NADH = N2 + (E)-4-coumarate + NAD(+). Its function is as follows. Oxidoreductase involved in the biosynthesis of avenalumic acid (AVA). Catalyzes the denitrification of 3-diazoavenalumic acid (3-DAA) to produce AVA. It can also act on 3-diazocoumaric acid (3-DCA). Can use NADPH or NADH as a reductant, with a preference for NADPH. This chain is 3-diazoavenalumate denitrifying reductase, found in Streptomyces sp.